A 361-amino-acid polypeptide reads, in one-letter code: Ribosomal RNA large subunit methyltransferase M (361 aa).

S-adenosyl-L-methionine contacts are provided by residues Ser187, 220–223 (CPGG), Asp239, Asp259, and Asp276. Lys305 (proton acceptor) is an active-site residue.

This sequence belongs to the class I-like SAM-binding methyltransferase superfamily. RNA methyltransferase RlmE family. RlmM subfamily. In terms of assembly, monomer.

It localises to the cytoplasm. The catalysed reaction is cytidine(2498) in 23S rRNA + S-adenosyl-L-methionine = 2'-O-methylcytidine(2498) in 23S rRNA + S-adenosyl-L-homocysteine + H(+). In terms of biological role, catalyzes the 2'-O-methylation at nucleotide C2498 in 23S rRNA. The protein is Ribosomal RNA large subunit methyltransferase M of Shewanella amazonensis (strain ATCC BAA-1098 / SB2B).